An 88-amino-acid chain; its full sequence is MEVETDKKKLIESFRLHEKDTGSAVVQVALLTQKIKRLTAHLQNNRKDHSSRRGLLRMVNRRRKLLEYLNRTEPEKYREMLSRLSLRK.

This sequence belongs to the universal ribosomal protein uS15 family. Part of the 30S ribosomal subunit. Forms a bridge to the 50S subunit in the 70S ribosome, contacting the 23S rRNA.

One of the primary rRNA binding proteins, it binds directly to 16S rRNA where it helps nucleate assembly of the platform of the 30S subunit by binding and bridging several RNA helices of the 16S rRNA. Functionally, forms an intersubunit bridge (bridge B4) with the 23S rRNA of the 50S subunit in the ribosome. In Methylacidiphilum infernorum (isolate V4) (Methylokorus infernorum (strain V4)), this protein is Small ribosomal subunit protein uS15.